A 510-amino-acid polypeptide reads, in one-letter code: UDP-N-acetylmuramoyl-tripeptide--D-alanyl-D-alanine ligase (510 aa).

136–142 (GSSGKTS) serves as a coordination point for ATP.

This sequence belongs to the MurCDEF family. MurF subfamily.

The protein localises to the cytoplasm. It carries out the reaction D-alanyl-D-alanine + UDP-N-acetyl-alpha-D-muramoyl-L-alanyl-gamma-D-glutamyl-meso-2,6-diaminopimelate + ATP = UDP-N-acetyl-alpha-D-muramoyl-L-alanyl-gamma-D-glutamyl-meso-2,6-diaminopimeloyl-D-alanyl-D-alanine + ADP + phosphate + H(+). It participates in cell wall biogenesis; peptidoglycan biosynthesis. Functionally, involved in cell wall formation. Catalyzes the final step in the synthesis of UDP-N-acetylmuramoyl-pentapeptide, the precursor of murein. This chain is UDP-N-acetylmuramoyl-tripeptide--D-alanyl-D-alanine ligase, found in Mycobacterium tuberculosis (strain CDC 1551 / Oshkosh).